The primary structure comprises 74 residues: Tau-AnmTx Ueq 12-1 (74 aa).

The signal sequence occupies residues 1-18; the sequence is MCLLMLVLGAMYVQGWHS. Positions 19-27 are cleaved as a propeptide — removed in mature form; that stretch reads AGFGKRTLK. 5 cysteine pairs are disulfide-bonded: Cys30–Cys37, Cys40–Cys71, Cys46–Cys64, Cys51–Cys72, and Cys58–Cys73.

Belongs to the Cnidaria small cysteine-rich protein (SCRiP) family. Detected in mucus secreted from ectoderm.

The protein localises to the secreted. Its function is as follows. Potentiates activation of mammalian TRPA1, a non-selective cation channel involved in perception of pain, in vitro yet has an analgesic and anti-inflammatory effect in vivo. Has antibacterial activity against C.glutamicum (MIC=50 uM) and, to a lesser extent, against S.aureus but not against P.aeruginosa or E.coli. The chain is Tau-AnmTx Ueq 12-1 from Urticina eques (Sea anemone).